The chain runs to 968 residues: RNA polymerase-associated protein RapA (968 aa).

Positions 164-334 (DVGRRHAPRV…FARLRLLDPN (171 aa)) constitute a Helicase ATP-binding domain. 177–184 (DEVGLGKT) serves as a coordination point for ATP. Residues 280 to 283 (DEAH) carry the DEAH box motif. One can recognise a Helicase C-terminal domain in the interval 490 to 685 (RVEWLMGYLT…ALKAQLEQGR (196 aa)).

It belongs to the SNF2/RAD54 helicase family. RapA subfamily. As to quaternary structure, interacts with the RNAP. Has a higher affinity for the core RNAP than for the holoenzyme. Its ATPase activity is stimulated by binding to RNAP.

Transcription regulator that activates transcription by stimulating RNA polymerase (RNAP) recycling in case of stress conditions such as supercoiled DNA or high salt concentrations. Probably acts by releasing the RNAP, when it is trapped or immobilized on tightly supercoiled DNA. Does not activate transcription on linear DNA. Probably not involved in DNA repair. This is RNA polymerase-associated protein RapA from Salmonella typhi.